Reading from the N-terminus, the 953-residue chain is MILQEGLPLLYQQFTALFGKNLLLSWRNKRATCLQIFSSFFFILLIFCIEEAMKASDASSSAYKNITDPTLLVSPPILPCEDKFFVKLPCYDFVWSGNNSRRVTDIVSAIMANNPGRPIPTNKVQSFKEPDEVDTWLLSHPLQVPGALHFVERNASVISYGVQTNSSSESKRGQTEDPTFKFLVPLQVAAEREIARSLLGDPNFGWGLGFKEFARPAIITETTSALSVMGPVFFLAFSMFGFVLQLGALVTEKELKLRQAMTMMGVYDSAYWLSWLTWEGILTLVSSLFLVLFGMIFRFDFFLKNSFVLVFLLFLLFQFNMIGLAFALSSIISKSSSATTVGFLVFLIGFITQFVSATGFPYSSSYAVSRRVMWSLFPPNTFSAGLKLLLDATSTPKSSGISWSNRAVCEGGQATCVISINIIYQWLLGTFLFWFVLAIYFDNIIPNASGVRKPIFYFLAPGYWTGKGGNKVEEGSIFSCVGSVPLVEHNTPNDKDVLEEETEVKQQAMDGIADPNIAVQIHGLAKTYPGTTKLGCCKCTKTSPFHAVKGLWMNIAKDQLFCLLGPNGAGKTTTISCLTGINPVTGGDALIYGDSIRSSVGISNIRKMIGVCPQFDILWDALSSEQHLHLFASIKGLPPASIKSTAEKLLADVKLTGAAKVRAGSYSGGMKRRLSVAVALIGDPKLVFLDEPTTGMDPITRRHVWDIIQESKKGRAIILTTHSMEEADILSDRIGIMAKGRLRCIGTSIRLKSRFGTGFVATVSFIENKNDNNIGVGASHEPLKKFFKEHLKVEPTEENKAFMTFVIPHDKENLLTGFFEELQNRESEFGISDIQLGLATLEEVFLNIARQAELESATAEGNMVTLELASGISLEIPVGARFVGIPDTENAENPSGVMVEVYWQQDGSGSMCISGHSSEMRVPQNVPVTRPPSPNALGHKSLRQGVRGIVIDL.

6 helical membrane-spanning segments follow: residues 33 to 53 (CLQI…EEAM), 230 to 250 (GPVF…GALV), 277 to 297 (TWEG…GMIF), 307 to 327 (FVLV…LAFA), 341 to 361 (VGFL…TGFP), and 417 to 437 (VISI…WFVL). Residues 519 to 764 (VQIHGLAKTY…FGTGFVATVS (246 aa)) form the ABC transporter domain. 565–572 (GPNGAGKT) is a binding site for ATP.

Belongs to the ABC transporter superfamily. ABCA family. CPR flippase (TC 3.A.1.211) subfamily.

It is found in the membrane. This chain is ABC transporter A family member 11 (ABCA11), found in Arabidopsis thaliana (Mouse-ear cress).